The primary structure comprises 91 residues: Progonadoliberin-1 (91 aa).

Positions 1 to 23 (MEPIPKLLAGLLLLTLCVVGCSS) are cleaved as a signal peptide. Q24 is subject to Pyrrolidone carboxylic acid. A Glycine amide modification is found at G33.

It belongs to the GnRH family. The precursor is cleaved by ACE, which removes the Gly-Lys-Arg peptide at the C-terminus, leading to mature hormone. The mature form of Gonadoliberin-1 is also cleaved and degraded by ACE.

Its subcellular location is the secreted. Stimulates the secretion of gonadotropins; it stimulates the secretion of both luteinizing and follicle-stimulating hormones. The polypeptide is Progonadoliberin-1 (GNRH1) (Sus scrofa (Pig)).